Reading from the N-terminus, the 100-residue chain is Competence protein ComGE (100 aa).

Residues 15–35 traverse the membrane as a helical segment; the sequence is VILLEAVVALAIFASIATLLL.

The transformation pili are flexible filaments, consisting mainly of the major pilin ComGC and smaller amounts of the minor pilins, including at least ComGD, ComGF and ComGG, and perhaps ComGE. Interacts with ComGD. Interacts with ComGF. Interacts with ComGG.

The protein resides in the cell membrane. Its subcellular location is the cell surface. Required for formation of the type IV-like pilus (T4P) that plays a role in transformation. Transformation pili are dynamically extended and retracted, perhaps thereby promoting DNA uptake and transformation. Involved in transformation. Required for DNA binding. In Streptococcus pneumoniae (strain ATCC BAA-255 / R6), this protein is Competence protein ComGE.